Here is an 863-residue protein sequence, read N- to C-terminus: Ribosomal protein S6 kinase alpha-5 (863 aa).

The segment covering Met-1–Gly-21 has biased composition (gly residues). The tract at residues Met-1 to Glu-22 is disordered. A Protein kinase 1 domain is found at Phe-48–Phe-317. ATP-binding positions include Leu-54–Val-62 and Lys-80. Asp-176 functions as the Proton acceptor in the catalytic mechanism. Phosphoserine; by autocatalysis is present on Ser-211. One can recognise an AGC-kinase C-terminal domain in the interval Glu-318–Asn-386. The residue at position 359 (Ser-359) is a Phosphoserine; by MAPK1, MAPK3 and MAPK14. Ser-375 and Ser-380 each carry phosphoserine; by autocatalysis. A Protein kinase 2 domain is found at Asp-428–Ile-675. Residues Leu-431–Arg-440 and Lys-454 each bind ATP. Catalysis depends on Asp-608, which acts as the Proton acceptor. At Thr-645 the chain carries Phosphothreonine; by MAPK1, MAPK3 and MAPK14. Ser-711, Ser-721, Ser-755, and Ser-759 each carry phosphoserine. Thr-764 carries the post-translational modification Phosphothreonine. Positions Ala-805–Asp-863 are disordered. Residues Thr-813–Ser-832 are compositionally biased toward low complexity. Ser-814, Ser-816, and Ser-822 each carry phosphoserine; by autocatalysis. Residues Gln-833–Asp-863 are compositionally biased toward polar residues. Ser-862 is modified (phosphoserine).

It belongs to the protein kinase superfamily. AGC Ser/Thr protein kinase family. S6 kinase subfamily. Forms a complex with either MAPK1/ERK2 or MAPK3/ERK1 in quiescent cells which transiently dissociates following mitogenic stimulation. Also associates with MAPK14/p38-alpha. Activated RPS6KA5 associates with and phosphorylates the NF-kappa-B p65 subunit RELA. Interacts with CREBBP and EP300. Mg(2+) serves as cofactor. In terms of processing, ser-375 and Thr-645 phosphorylation is required for kinase activity. Ser-375 and Ser-211 are autophosphorylated by the C-terminal kinase domain, and their phosphorylation is essential for the catalytic activity of the N-terminal kinase domain. Phosphorylated at Ser-359, Thr-645 and Thr-764 by MAPK1/ERK2, MAPK3/ERK1 and MAPK14/p38-alpha. Autophosphorylated at Ser-814, Ser-816 and Ser-822 by the N-terminal kinase domain. Post-translationally, ubiquitinated.

The protein localises to the nucleus. It catalyses the reaction L-seryl-[protein] + ATP = O-phospho-L-seryl-[protein] + ADP + H(+). The enzyme catalyses L-threonyl-[protein] + ATP = O-phospho-L-threonyl-[protein] + ADP + H(+). Activated by phosphorylation at Ser-359, Thr-645 and Thr-764 by MAPK1/ERK2, MAPK3/ERK1 and MAPK14/p38-alpha, and by further autophosphorylation of Ser-211, Ser-375 and Ser-380 by the activated C-terminal kinase domain. The active N-terminal kinase domain finally phosphorylates downstream substrates, as well as Ser-814, Ser-816 and Ser-822 in its own C-terminal region. Functionally, serine/threonine-protein kinase that is required for the mitogen or stress-induced phosphorylation of the transcription factors CREB1 and ATF1 and for the regulation of the transcription factors RELA, STAT3 and ETV1/ER81, and that contributes to gene activation by histone phosphorylation and functions in the regulation of inflammatory genes. Phosphorylates CREB1 and ATF1 in response to mitogenic or stress stimuli such as UV-C irradiation, epidermal growth factor (EGF) and anisomycin. Plays an essential role in the control of RELA transcriptional activity in response to TNF and upon glucocorticoid, associates in the cytoplasm with the glucocorticoid receptor NR3C1 and contributes to RELA inhibition and repression of inflammatory gene expression. In skeletal myoblasts is required for phosphorylation of RELA at 'Ser-276' during oxidative stress. In erythropoietin-stimulated cells, is necessary for the 'Ser-727' phosphorylation of STAT3 and regulation of its transcriptional potential. Phosphorylates ETV1/ER81 at 'Ser-191' and 'Ser-216', and thereby regulates its ability to stimulate transcription, which may be important during development and breast tumor formation. Directly represses transcription via phosphorylation of 'Ser-1' of histone H2A. Phosphorylates 'Ser-10' of histone H3 in response to mitogenics, stress stimuli and EGF, which results in the transcriptional activation of several immediate early genes, including proto-oncogenes c-fos/FOS and c-jun/JUN. May also phosphorylate 'Ser-28' of histone H3. Mediates the mitogen- and stress-induced phosphorylation of high mobility group protein 1 (HMGN1/HMG14). In lipopolysaccharide-stimulated primary macrophages, acts downstream of the Toll-like receptor TLR4 to limit the production of pro-inflammatory cytokines. Functions probably by inducing transcription of the MAP kinase phosphatase DUSP1 and the anti-inflammatory cytokine interleukin 10 (IL10), via CREB1 and ATF1 transcription factors. Plays a role in neuronal cell death by mediating the downstream effects of excitotoxic injury. Phosphorylates TRIM7 at 'Ser-106' in response to growth factor signaling via the MEK/ERK pathway, thereby stimulating its ubiquitin ligase activity. This chain is Ribosomal protein S6 kinase alpha-5 (Rps6ka5), found in Mus musculus (Mouse).